The sequence spans 293 residues: MNNRRFDCIGIVGHPRHPAALATHEILYHWLKARGYAVMVEQQIAHDLNLTDAITGSLADIGQKADLAVVVGGDGNMLGAARVLARYDIKVIGVNRGNLGFLTDLDPDNALQQLSDVLEGEYLSEQRFLLETHVRRTNQQSRISTAINEVVLHPGKVAHMIEFEVYIDDRFAFSQRSDGLIIATPTGSTAYSLSAGGPILTPTLDAIVLVPMFPHTLTARPLVISSSSTIRLKFSHITSDLEISCDSQIALPIQEGEEVLIRRSDFHLNLIHPKDYSYFNTLSTKLGWSKKLF.

Asp74 functions as the Proton acceptor in the catalytic mechanism. NAD(+) contacts are provided by residues 74 to 75 (DG), 148 to 149 (NE), His159, Arg176, Asp178, Thr186, 189 to 194 (TAYSLS), and Gln248.

This sequence belongs to the NAD kinase family. As to quaternary structure, homodimer. A divalent metal cation is required as a cofactor.

It localises to the cytoplasm. It catalyses the reaction NAD(+) + ATP = ADP + NADP(+) + H(+). Involved in the regulation of the intracellular balance of NAD and NADP, and is a key enzyme in the biosynthesis of NADP. Catalyzes specifically the phosphorylation on 2'-hydroxyl of the adenosine moiety of NAD to yield NADP. This chain is NAD kinase, found in Yersinia pestis.